A 727-amino-acid chain; its full sequence is 1,4-alpha-glucan branching enzyme GlgB (727 aa).

D405 (nucleophile) is an active-site residue. Catalysis depends on E458, which acts as the Proton donor.

Belongs to the glycosyl hydrolase 13 family. GlgB subfamily. In terms of assembly, monomer.

It catalyses the reaction Transfers a segment of a (1-&gt;4)-alpha-D-glucan chain to a primary hydroxy group in a similar glucan chain.. The protein operates within glycan biosynthesis; glycogen biosynthesis. Its function is as follows. Catalyzes the formation of the alpha-1,6-glucosidic linkages in glycogen by scission of a 1,4-alpha-linked oligosaccharide from growing alpha-1,4-glucan chains and the subsequent attachment of the oligosaccharide to the alpha-1,6 position. This is 1,4-alpha-glucan branching enzyme GlgB from Yersinia pseudotuberculosis serotype I (strain IP32953).